A 131-amino-acid polypeptide reads, in one-letter code: MALWVTAVLALACLGGLAAPGPVPRSVSLPLTLKELIEELSNITQDQTPLCNGSMVWSVDLAAGGFCVALDSLTNISNCNAIYRTQRILHGLCNRKAPTTVSSLPDTKIEVAHFITKLLSYTKQLFRHGPF.

The signal sequence occupies residues 1 to 18; sequence MALWVTAVLALACLGGLA. N-linked (GlcNAc...) asparagine glycans are attached at residues Asn-42, Asn-52, and Asn-75. 2 disulfides stabilise this stretch: Cys-51–Cys-79 and Cys-67–Cys-93.

Belongs to the IL-4/IL-13 family. Interacts with IL13RA2.

The protein resides in the secreted. Cytokine that plays important roles in allergic inflammation and immune response to parasite infection. Synergizes with IL2 in regulating interferon-gamma synthesis. Stimulates B-cell proliferation, and activation of eosinophils, basophils, and mast cells. Plays an important role in controlling IL33 activity by modulating the production of transmembrane and soluble forms of interleukin-1 receptor-like 1/IL1RL1. Displays the capacity to antagonize Th1-driven proinflammatory immune response and downregulates synthesis of many proinflammatory cytokines including IL1, IL6, IL10, IL12 and TNF-alpha through a mechanism that partially involves suppression of NF-kappa-B. Also functions on nonhematopoietic cells, including endothelial cells where it induces vascular cell adhesion protein 1/VCAM1, which is important in the recruitment of eosinophils. Exerts its biological effects through its receptors which comprises the IL4R chain and the IL13RA1 chain, to activate JAK1 and TYK2, leading to the activation of STAT6. Aside from IL13RA1, another receptor IL13RA2 acts as a high affinity decoy for IL13 and mediates internalization and depletion of extracellular IL13. The polypeptide is Interleukin-13 (Il13) (Mus musculus (Mouse)).